The primary structure comprises 423 residues: Gamma-glutamyl phosphate reductase (423 aa).

The segment covering 1-14 (MTLQAAPRSAAAQQ) has biased composition (low complexity). The segment at 1 to 25 (MTLQAAPRSAAAQQREPDLRQEVHD) is disordered. Over residues 15 to 25 (REPDLRQEVHD) the composition is skewed to basic and acidic residues.

Belongs to the gamma-glutamyl phosphate reductase family.

It is found in the cytoplasm. It carries out the reaction L-glutamate 5-semialdehyde + phosphate + NADP(+) = L-glutamyl 5-phosphate + NADPH + H(+). It participates in amino-acid biosynthesis; L-proline biosynthesis; L-glutamate 5-semialdehyde from L-glutamate: step 2/2. Functionally, catalyzes the NADPH-dependent reduction of L-glutamate 5-phosphate into L-glutamate 5-semialdehyde and phosphate. The product spontaneously undergoes cyclization to form 1-pyrroline-5-carboxylate. The sequence is that of Gamma-glutamyl phosphate reductase from Mycobacterium marinum (strain ATCC BAA-535 / M).